Here is a 192-residue protein sequence, read N- to C-terminus: FAD-linked sulfhydryl oxidase erv2 (192 aa).

The Cytoplasmic segment spans residues 1–8 (MILNRRIQ). Residues 9-29 (VILPTLLILSFIIWIFHSVMV) traverse the membrane as a helical; Signal-anchor segment. At 30-192 (DKDWRLFMPE…VINEDHDYSG (163 aa)) the chain is on the lumenal side. One can recognise an ERV/ALR sulfhydryl oxidase domain in the interval 61 to 162 (HDNNTNNLMV…TSCDGFNERY (102 aa)). FAD is bound by residues Trp-74, Cys-138, His-141, Asn-145, and Tyr-162. An intrachain disulfide couples Cys-138 to Cys-155.

FAD serves as cofactor.

The protein localises to the endoplasmic reticulum membrane. It localises to the cytoplasm. The protein resides in the nucleus. The enzyme catalyses 2 R'C(R)SH + O2 = R'C(R)S-S(R)CR' + H2O2. Its function is as follows. FAD-dependent sulfhydryl oxidase that catalyzes disulfide bond formation in the endoplasmic reticulum lumen. This Schizosaccharomyces pombe (strain 972 / ATCC 24843) (Fission yeast) protein is FAD-linked sulfhydryl oxidase erv2 (erv2).